Reading from the N-terminus, the 1400-residue chain is DNA-directed RNA polymerase subunit beta' (1400 aa).

The Zn(2+) site is built by Cys-71, Cys-73, Cys-86, and Cys-89. Residues Asp-462, Asp-464, and Asp-466 each coordinate Mg(2+). Zn(2+) contacts are provided by Cys-811, Cys-885, Cys-892, and Cys-895.

This sequence belongs to the RNA polymerase beta' chain family. In terms of assembly, the RNAP catalytic core consists of 2 alpha, 1 beta, 1 beta' and 1 omega subunit. When a sigma factor is associated with the core the holoenzyme is formed, which can initiate transcription. The cofactor is Mg(2+). Zn(2+) serves as cofactor.

It carries out the reaction RNA(n) + a ribonucleoside 5'-triphosphate = RNA(n+1) + diphosphate. Functionally, DNA-dependent RNA polymerase catalyzes the transcription of DNA into RNA using the four ribonucleoside triphosphates as substrates. The sequence is that of DNA-directed RNA polymerase subunit beta' from Brucella ovis (strain ATCC 25840 / 63/290 / NCTC 10512).